A 319-amino-acid polypeptide reads, in one-letter code: F-box only protein 8 (319 aa).

In terms of domain architecture, F-box spans 68 to 111 (FINLEMLPPELSFTILSYLNATDLCLASCVWQDLANDELLWQGL). In terms of domain architecture, SEC7 spans 146–276 (FNANPDEGVN…LILLSIDLTS (131 aa)).

May promote guanine-nucleotide exchange on an ARF. Promotes the activation of ARF through replacement of GDP with GTP (Potential). The sequence is that of F-box only protein 8 (FBXO8) from Homo sapiens (Human).